A 1256-amino-acid chain; its full sequence is Pullulanase A (1256 aa).

An N-terminal signal peptide occupies residues 1–44 (MRKTPSHTEKKMVYSIRSLKNGTGSVLIGASLVLLAMATPTISS). The interval 42 to 117 (ISSDESTPTT…VTTETKAEEP (76 aa)) is disordered. Over residues 48 to 61 (TPTTNEPNNRNTTT) the composition is skewed to low complexity. Polar residues predominate over residues 79 to 90 (DISSPRNANASL). Low complexity predominate over residues 99-111 (TEPTTSTSPVTTE). Substrate is bound by residues 141 to 143 (WTW), Trp153, Asp199, 248 to 250 (WYW), Trp261, Lys303, and Asn308. Positions 646 and 648 each coordinate Ca(2+). Residues 652-653 (YD) and Phe728 each bind substrate. Asp763 serves as the catalytic Nucleophile. The Proton donor role is filled by Glu792. Position 794 (Trp794) interacts with substrate. Met813, Thr816, and Asp817 together coordinate Ca(2+). Positions 824, 827, and 834 each coordinate substrate. Residues Asp867 and Asp871 each contribute to the Ca(2+) site. Substrate contacts are provided by residues Asn881, Lys954, and 974–976 (DSY). Asp977 contacts Ca(2+). The interval 1126 to 1224 (SQNGTSHEST…TPDRQAELPN (99 aa)) is disordered. Positions 1134–1172 (STAEEKPDSTPSKPEHQDPAPEARPDSTKPDAKVADAEN) are enriched in basic and acidic residues. Residues 1181–1194 (SQAEQPAQEAQASS) show a composition bias toward low complexity. Over residues 1200–1210 (QNESVENSSKK) the composition is skewed to polar residues. The short motif at 1222–1226 (LPNTG) is the LPXTG sorting signal element. Thr1225 is subject to Pentaglycyl murein peptidoglycan amidated threonine. Residues 1226–1256 (GIKNENKLLFAGISLLALLGLGFLLKNKKEN) constitute a propeptide, removed by sortase.

It belongs to the glycosyl hydrolase 13 family.

Its subcellular location is the secreted. The protein localises to the cell wall. It is found in the cell surface. The catalysed reaction is Hydrolysis of (1-&gt;6)-alpha-D-glucosidic linkages in pullulan, amylopectin and glycogen, and in the alpha- and beta-limit dextrins of amylopectin and glycogen.. Inhibited by 4-O-alpha-D-glucopyranosylmoranoline (G1M). Virulence factor. Involved in the degradation of glycogen of the mammalian host cells. Hydrolyzes the alpha-1,6-branchpoints of glycogen. Hydrolyzes pullulan. Does not hydrolyze dextran. Binds to mouse lung alveolar type II cells that are rich in glycogen stores. Is an alpha-glucan-specific carbohydrate-binding protein, which binds to amylose (pure alpha-(1,4)-linked glucose), amylopectin (alpha-(1,4)-linked glucose with alpha-(1,6) branch points), pullulan (linear polymer of mixed alpha-(1,4)- and alpha-(1,6)-linked glucose) and glycogen (similar to amylopectin with more frequent alpha-(1,6) branch points) in vitro. Does not bind to dextran (a linear polymer of alpha-(1,6)-linked glucose). The polypeptide is Pullulanase A (Streptococcus pneumoniae serotype 2 (strain D39 / NCTC 7466)).